We begin with the raw amino-acid sequence, 496 residues long: E3 ubiquitin-protein ligase CBL-C (496 aa).

The segment at Pro-7–Cys-144 is 4H. Positions Pro-7 to Glu-320 constitute a Cbl-PTB domain. The tract at residues Gly-145–Phe-217 is EF-hand-like. Ca(2+) contacts are provided by Asp-198, Thr-200, Asn-202, and Glu-209. The tract at residues Gln-218–Glu-320 is SH2-like. Position 263 (Arg-263) interacts with 4-O-phospho-L-tyrosine. Positions Leu-321–Leu-349 are linker. Phosphotyrosine; by SRC is present on Tyr-340. An RING-type zinc finger spans residues Cys-350–Arg-389. The interaction with RET stretch occupies residues Cys-350–Glu-494. Residues Pro-432 to Lys-453 are disordered.

Interacts with Ubiquitin-conjugating enzyme E2 UBE2D2 and UBE2D3. Isoform 1 interacts with EGFR (tyrosine phosphorylated). Interacts with the SH3 domain proteins LYN and CRK. Interacts (via RING-type zinc finger) with TGFB1I1 (via LIM zinc-binding domain 2); the interaction is direct and enhances the E3 activity. Interacts directly with RET (inactive) and CD2AP; dissociates from RET upon RET activation by GDNF which also increases the interaction with CD2AP suggesting dissociation as CBLC:CD2AP complex. Interacts with SRC; the interaction is enhanced when SRC is phosphorylated at 'Tyr-419'. Post-translationally, phosphorylated on tyrosines by EGFR. Phosphorylated on multiple tyrosine residues by SRC. Isoform 1, but not isoform 2, is phosphorylated on tyrosines by EGFR. In terms of processing, autoubiquitinated, when phosphorylated at Tyr-340. In terms of tissue distribution, widely expressed in tissues, where the expression is restricted to epithelial cells (at protein level).

It carries out the reaction S-ubiquitinyl-[E2 ubiquitin-conjugating enzyme]-L-cysteine + [acceptor protein]-L-lysine = [E2 ubiquitin-conjugating enzyme]-L-cysteine + N(6)-ubiquitinyl-[acceptor protein]-L-lysine.. Phosphorylation at Tyr-340 is necessary and sufficient for the activation of E3 activity. Its function is as follows. Acts as an E3 ubiquitin-protein ligase, which accepts ubiquitin from specific E2 ubiquitin-conjugating enzymes, and then transfers it to substrates promoting their degradation by the proteasome. Functionally coupled with the E2 ubiquitin-protein ligases UB2D1, UB2D2 and UB2D3. Regulator of EGFR mediated signal transduction; upon EGF activation, ubiquitinates EGFR. Isoform 1, but not isoform 2, inhibits EGF stimulated MAPK1 activation. Promotes ubiquitination of SRC phosphorylated at 'Tyr-424', has the highest ubiquitin ligase activity among CBL family proteins. In collaboration with CD2AP may act as regulatory checkpoint for Ret signaling by modulating the rate of RET degradation after ligand activation; CD2AP converts it from an inhibitor to a promoter of RET degradation; the function limits the potency of GDNF on neuronal survival. This is E3 ubiquitin-protein ligase CBL-C (Cblc) from Mus musculus (Mouse).